We begin with the raw amino-acid sequence, 393 residues long: 4-hydroxyphenylpyruvate dioxygenase (393 aa).

Thr2 carries the post-translational modification N-acetylthreonine. VOC domains are found at residues 18-149 (HFHS…LVEK) and 180-338 (IIDH…IFTK). Residue Lys132 is modified to N6-succinyllysine. Fe cation is bound at residue His183. Phosphoserine occurs at positions 211, 226, and 250. Fe cation contacts are provided by His266 and Glu349.

It belongs to the 4HPPD family. Homodimer. Fe cation serves as cofactor.

It is found in the cytoplasm. The protein localises to the endoplasmic reticulum membrane. It localises to the golgi apparatus membrane. The enzyme catalyses 3-(4-hydroxyphenyl)pyruvate + O2 = homogentisate + CO2. It functions in the pathway amino-acid degradation; L-phenylalanine degradation; acetoacetate and fumarate from L-phenylalanine: step 3/6. Its function is as follows. Catalyzes the conversion of 4-hydroxyphenylpyruvic acid to homogentisic acid, one of the steps in tyrosine catabolism. In Bos taurus (Bovine), this protein is 4-hydroxyphenylpyruvate dioxygenase (HPD).